The primary structure comprises 199 residues: MYETYHSGWIECITGSMFSGKSEELIRRLRRGIYAKQKVVVFKPAIDDRYHKEKVVSHNGNAIEAINISKASEIMTHDLTNVDVIGIDEVQFFDDEIVSIVEKLSADGHRVIVAGLDMDFRGEPFEPMPKLMAVSEQVTKLQAVCAVCGSSSSRTQRLINGKPAKIDDPIILVGANESYEPRCRAHHIVAPSDNNKEEL.

ATP-binding positions include 15 to 22 (GSMFSGKS) and 88 to 91 (DEVQ). Glu89 functions as the Proton acceptor in the catalytic mechanism. Positions 145, 148, 183, and 186 each coordinate Zn(2+).

This sequence belongs to the thymidine kinase family. As to quaternary structure, homotetramer.

It is found in the cytoplasm. It catalyses the reaction thymidine + ATP = dTMP + ADP + H(+). The chain is Thymidine kinase from Staphylococcus aureus (strain USA300).